The primary structure comprises 249 residues: MKFILFALLVSAGSWYGWKQLHSQDAVSKPIRYVKIEGAFQYTNKETLKRILTPEMKRGFYHVDMDAIHQLISQLPLVAAVDVNRVWPDAVHIKITEQKPIVRWGDKAVLNKQGEVLIPDDIDEFKNLPLITGPEGQEKKLLEIMKGVYIVLKDKSMQLAEFHVNDRRAWRIKLASGLEMQLGRKAPLENMQRFLKTMDLLGEEQVAMMASVDTRYPNGYAVTWKPDTPEIDWKAIAENYKNVMKERRI.

Over 1–6 (MKFILF) the chain is Cytoplasmic. The chain crosses the membrane as a helical span at residues 7–23 (ALLVSAGSWYGWKQLHS). Residues 24-249 (QDAVSKPIRY…YKNVMKERRI (226 aa)) lie on the Periplasmic side of the membrane. Residues 29–98 (KPIRYVKIEG…DAVHIKITEQ (70 aa)) enclose the POTRA domain.

It belongs to the FtsQ/DivIB family. FtsQ subfamily. As to quaternary structure, part of a complex composed of FtsB, FtsL and FtsQ.

Its subcellular location is the cell inner membrane. Essential cell division protein. May link together the upstream cell division proteins, which are predominantly cytoplasmic, with the downstream cell division proteins, which are predominantly periplasmic. May control correct divisome assembly. In Methylomonas methanica (strain DSM 25384 / MC09), this protein is Cell division protein FtsQ.